A 181-amino-acid chain; its full sequence is UPF0398 protein lin2003 (181 aa).

The protein belongs to the UPF0398 family.

The polypeptide is UPF0398 protein lin2003 (Listeria innocua serovar 6a (strain ATCC BAA-680 / CLIP 11262)).